The following is a 380-amino-acid chain: Cytochrome b (380 aa).

The next 4 helical transmembrane spans lie at 33–53 (FGSLLGLCLIAQILTGLFLAM), 77–98 (WLIRNLHANGASFFFICLYLHV), 113–133 (WNIGVVLLLLVMMTAFVGYVL), and 178–198 (FFAFHFLFPFIIAAMVLLHLL). Histidine 83 and histidine 97 together coordinate heme b. 2 residues coordinate heme b: histidine 182 and histidine 196. An a ubiquinone-binding site is contributed by histidine 201. A run of 4 helical transmembrane segments spans residues 226-246 (YKDLFGFVILLLALSILTLFS), 288-308 (LGGVLALLASILILMVVPLLH), 320-340 (LTQILFWTLVADVAILTWIGG), and 347-367 (FITVGQVASVLYFALFLILIP).

Belongs to the cytochrome b family. As to quaternary structure, the cytochrome bc1 complex contains 3 respiratory subunits (MT-CYB, CYC1 and UQCRFS1), 2 core proteins (UQCRC1 and UQCRC2) and probably 6 low-molecular weight proteins. It depends on heme b as a cofactor.

It is found in the mitochondrion inner membrane. Functionally, component of the ubiquinol-cytochrome c reductase complex (complex III or cytochrome b-c1 complex) that is part of the mitochondrial respiratory chain. The b-c1 complex mediates electron transfer from ubiquinol to cytochrome c. Contributes to the generation of a proton gradient across the mitochondrial membrane that is then used for ATP synthesis. This Allocyttus niger (Black oreo dory) protein is Cytochrome b (mt-cyb).